We begin with the raw amino-acid sequence, 656 residues long: Chaperone protein HtpG (656 aa).

The interval 1 to 364 (MSEQNPTDSK…SADLPLNVSR (364 aa)) is a; substrate-binding. A b region spans residues 365–583 (EILQESRDVK…EGELSPQMIQ (219 aa)). The segment at 584 to 656 (MLKQMGQDVP…LRRVNELLMK (73 aa)) is c.

Belongs to the heat shock protein 90 family. In terms of assembly, homodimer.

The protein localises to the cytoplasm. In terms of biological role, molecular chaperone. Has ATPase activity. This is Chaperone protein HtpG from Psychrobacter arcticus (strain DSM 17307 / VKM B-2377 / 273-4).